A 301-amino-acid chain; its full sequence is GTP cyclohydrolase FolE2 (301 aa).

It belongs to the GTP cyclohydrolase IV family.

It catalyses the reaction GTP + H2O = 7,8-dihydroneopterin 3'-triphosphate + formate + H(+). It functions in the pathway cofactor biosynthesis; 7,8-dihydroneopterin triphosphate biosynthesis; 7,8-dihydroneopterin triphosphate from GTP: step 1/1. In terms of biological role, converts GTP to 7,8-dihydroneopterin triphosphate. This chain is GTP cyclohydrolase FolE2, found in Pseudomonas savastanoi pv. phaseolicola (strain 1448A / Race 6) (Pseudomonas syringae pv. phaseolicola (strain 1448A / Race 6)).